Reading from the N-terminus, the 412-residue chain is Mannose-6-phosphate isomerase (412 aa).

Residues Gln99, His101, Glu126, and His265 each contribute to the Zn(2+) site. Arg284 is an active-site residue.

It belongs to the mannose-6-phosphate isomerase type 1 family. It depends on Zn(2+) as a cofactor.

The protein resides in the cytoplasm. It is found in the nucleus. It catalyses the reaction D-mannose 6-phosphate = D-fructose 6-phosphate. It participates in nucleotide-sugar biosynthesis; GDP-alpha-D-mannose biosynthesis; alpha-D-mannose 1-phosphate from D-fructose 6-phosphate: step 1/2. Its function is as follows. Involved in the synthesis of the GDP-mannose and dolichol-phosphate-mannose required for a number of critical mannosyl transfer reactions. The chain is Mannose-6-phosphate isomerase (pmi40) from Schizosaccharomyces pombe (strain 972 / ATCC 24843) (Fission yeast).